We begin with the raw amino-acid sequence, 500 residues long: ATP synthase subunit alpha (500 aa).

167-174 (GDRQTGKT) provides a ligand contact to ATP.

This sequence belongs to the ATPase alpha/beta chains family. F-type ATPases have 2 components, CF(1) - the catalytic core - and CF(0) - the membrane proton channel. CF(1) has five subunits: alpha(3), beta(3), gamma(1), delta(1), epsilon(1). CF(0) has three main subunits: a(1), b(2) and c(9-12). The alpha and beta chains form an alternating ring which encloses part of the gamma chain. CF(1) is attached to CF(0) by a central stalk formed by the gamma and epsilon chains, while a peripheral stalk is formed by the delta and b chains.

It localises to the cell inner membrane. The catalysed reaction is ATP + H2O + 4 H(+)(in) = ADP + phosphate + 5 H(+)(out). Its function is as follows. Produces ATP from ADP in the presence of a proton gradient across the membrane. The alpha chain is a regulatory subunit. This chain is ATP synthase subunit alpha, found in Wolinella succinogenes (strain ATCC 29543 / DSM 1740 / CCUG 13145 / JCM 31913 / LMG 7466 / NCTC 11488 / FDC 602W) (Vibrio succinogenes).